The primary structure comprises 138 residues: Large ribosomal subunit protein uL11c (138 aa).

Belongs to the universal ribosomal protein uL11 family. In terms of assembly, part of the ribosomal stalk of the 50S ribosomal subunit. Interacts with L10 and the large rRNA to form the base of the stalk. L10 forms an elongated spine to which L12 dimers bind in a sequential fashion forming a multimeric L10(L12)X complex.

The protein localises to the plastid. It is found in the chloroplast. Functionally, forms part of the ribosomal stalk which helps the ribosome interact with GTP-bound translation factors. In Cyanidioschyzon merolae (strain NIES-3377 / 10D) (Unicellular red alga), this protein is Large ribosomal subunit protein uL11c.